The chain runs to 153 residues: 3-hydroxyacyl-[acyl-carrier-protein] dehydratase FabZ (153 aa).

His54 is an active-site residue.

This sequence belongs to the thioester dehydratase family. FabZ subfamily.

The protein resides in the cytoplasm. The catalysed reaction is a (3R)-hydroxyacyl-[ACP] = a (2E)-enoyl-[ACP] + H2O. Involved in unsaturated fatty acids biosynthesis. Catalyzes the dehydration of short chain beta-hydroxyacyl-ACPs and long chain saturated and unsaturated beta-hydroxyacyl-ACPs. The chain is 3-hydroxyacyl-[acyl-carrier-protein] dehydratase FabZ from Shewanella pealeana (strain ATCC 700345 / ANG-SQ1).